The chain runs to 171 residues: Large ribosomal subunit protein bL21 (171 aa).

A disordered region spans residues 144-171 (AAPAKAEAAPKKKAAPKKAAAKTEEGEA). Residues 154 to 163 (KKKAAPKKAA) are compositionally biased toward basic residues.

The protein belongs to the bacterial ribosomal protein bL21 family. Part of the 50S ribosomal subunit. Contacts protein L20.

Functionally, this protein binds to 23S rRNA in the presence of protein L20. The chain is Large ribosomal subunit protein bL21 from Caulobacter vibrioides (strain ATCC 19089 / CIP 103742 / CB 15) (Caulobacter crescentus).